Consider the following 542-residue polypeptide: MANDITTTAAWQSLTERYEAFQGTTLRELFQDGGRAEKLSFDAAGLRVDLSKNLLDDAILTDLVALAEQAGLTDRIEAMFRGEHINNTEDRAVLHTALRLPVEESLEVDGQDVAADVHEVLGRMRDFATALRSGAWLGYTGRTIKKVVNIGIGGSDLGPAMATKALRAYATAGITAEFVSNVDPADMVSVLEDLDAESTLFVIASKTFTTQETLANANAAKNWLIEQLGSEEAVSKHFVAVSTNAEKVTAFGINPENMFGFWDWVGGRYSVDSAVGLSLMAVIGPRDFMRFLGGFRAMDEHFRYTDFGQNVPVLMALLSVWYTDFFGAETHAVLPYSEDLSRFAAYLQQLTMESNGKSVRRDGSPVTTGTGEIYWGEPGTNGQHAFFQLIHQGTRLIPADFIGFARPKQDLPAGEKSMHDLLMSNFFAQTKVLAFGKTAEEIAAEGVDDNLINHKVMPGNRPTTTILAEELTPAVLGALIALYEHIVFVQGVIWDINSFDQWGVELGKQQASDLAPAVSGEVEVDSGDSSTDALIRWYRTNR.

The Proton donor role is filled by glutamate 353. Residues histidine 384 and lysine 508 contribute to the active site.

The protein belongs to the GPI family.

The protein resides in the cytoplasm. The enzyme catalyses alpha-D-glucose 6-phosphate = beta-D-fructose 6-phosphate. It participates in carbohydrate biosynthesis; gluconeogenesis. Its pathway is carbohydrate degradation; glycolysis; D-glyceraldehyde 3-phosphate and glycerone phosphate from D-glucose: step 2/4. Catalyzes the reversible isomerization of glucose-6-phosphate to fructose-6-phosphate. The protein is Glucose-6-phosphate isomerase of Corynebacterium efficiens (strain DSM 44549 / YS-314 / AJ 12310 / JCM 11189 / NBRC 100395).